A 141-amino-acid polypeptide reads, in one-letter code: Large ribosomal subunit protein uL11 (141 aa).

The protein belongs to the universal ribosomal protein uL11 family. As to quaternary structure, part of the ribosomal stalk of the 50S ribosomal subunit. Interacts with L10 and the large rRNA to form the base of the stalk. L10 forms an elongated spine to which L12 dimers bind in a sequential fashion forming a multimeric L10(L12)X complex. In terms of processing, one or more lysine residues are methylated.

Its function is as follows. Forms part of the ribosomal stalk which helps the ribosome interact with GTP-bound translation factors. This chain is Large ribosomal subunit protein uL11, found in Thermotoga petrophila (strain ATCC BAA-488 / DSM 13995 / JCM 10881 / RKU-1).